Reading from the N-terminus, the 116-residue chain is SPbeta prophage-derived uncharacterized protein YoqA (116 aa).

The protein is SPbeta prophage-derived uncharacterized protein YoqA (yoqA) of Bacillus subtilis (strain 168).